The following is a 416-amino-acid chain: D-amino acid dehydrogenase (416 aa).

3 to 17 (ITILGSGVIGVTTAY) serves as a coordination point for FAD.

The protein belongs to the DadA oxidoreductase family. Requires FAD as cofactor.

The catalysed reaction is a D-alpha-amino acid + A + H2O = a 2-oxocarboxylate + AH2 + NH4(+). It functions in the pathway amino-acid degradation; D-alanine degradation; NH(3) and pyruvate from D-alanine: step 1/1. In terms of biological role, oxidative deamination of D-amino acids. The polypeptide is D-amino acid dehydrogenase (Brucella canis (strain ATCC 23365 / NCTC 10854 / RM-666)).